Consider the following 1597-residue polypeptide: Collagen alpha-1(XVII) chain (1597 aa).

Disordered stretches follow at residues 1 to 155 (MDVT…PSTR) and 168 to 188 (GSRS…PIPK). Topologically, residues 1 to 468 (MDVTKKNKRD…CGSCCSWWKW (468 aa)) are cytoplasmic. A nonhelical region (NC16A) region spans residues 1–567 (MDVTKKNKRD…AEQENGNLRG (567 aa)). Residues 9 to 19 (RDGSEVTERII) show a composition bias toward basic and acidic residues. Composition is skewed to polar residues over residues 58–96 (THGS…SPGS), 111–120 (EGSSSGNSSP), and 170–184 (RSAS…SNTL). The segment at 146-231 (RLQSASPSTR…WSSTLPAGSS (86 aa)) is necessary for interaction with DST and for the recruitment of DST to hemidesmosome. A helical; Signal-anchor for type II membrane protein membrane pass occupies residues 469-489 (LLGLLLTWLLLLGLLFGLIAL). Residues 490–1597 (AEEVRALKAR…KGGSWRLTSY (1108 aa)) are Extracellular-facing. 5 disordered regions span residues 562–857 (NGNL…SSSS), 907–927 (LRGP…FRVR), 970–1041 (LETY…ISSS), 1289–1316 (TAGV…VSGA), and 1344–1394 (FIVG…SSMG). Residues 568–1572 (SPGPKGDMGS…ELPLEEQPLA (1005 aa)) are triple-helical region. The span at 604–632 (PKGQKGSVGEPGMEGPMGQRGREGPMGPR) shows a compositional bias: low complexity. The span at 665-674 (GPKGSGGSPG) shows a compositional bias: gly residues. 2 stretches are compositionally biased toward low complexity: residues 730 to 748 (PGAV…AGPD) and 774 to 796 (DPGK…PGRP). Residues 820-838 (PGPPGPPGAMGPPGPPGAP) show a composition bias toward pro residues. Over residues 847-857 (AGESFMGSSSS) the composition is skewed to low complexity. Pro residues-rich tracts occupy residues 910 to 922 (PPGP…PPDL), 977 to 986 (PPGPPGPPGP), 1023 to 1035 (PGPP…PGPP), 1296 to 1310 (PGPP…PRGP), and 1348 to 1357 (PPGPPGPQGP). A compositionally biased stretch (low complexity) spans 1377 to 1393 (SSHSASVSRGSSYSSSM). N-linked (GlcNAc...) asparagine glycosylation is present at asparagine 1493. Residues 1531-1566 (GHPALEGTREKKETKVTKSMRGGEREASPSSHELPL) are disordered. Basic and acidic residues predominate over residues 1537–1557 (GTREKKETKVTKSMRGGEREA). The segment at 1573–1597 (SVLAMAYGVHVKISPKGGSWRLTSY) is nonhelical region (NC1).

Homotrimers of alpha 1(XVII)chains. Interacts (via cytoplasmic region) with ITGB4 (via cytoplasmic region). Interacts (via cytoplasmic region) with DST (via N-terminus). Interacts (via N-terminus) with PLEC. Interacts (via cytoplasmic region) with DSP. Post-translationally, the intracellular/endo domain is disulfide-linked. In terms of processing, prolines at the third position of the tripeptide repeating unit (G-X-Y) are hydroxylated in some or all of the chains. The ectodomain is shedded from the surface of keratinocytes resulting in a 120-kDa soluble form, also named as 120 kDa linear IgA disease antigen homolog. The shedding is mediated by membrane-bound metalloproteases. As to expression, upper lamina lucidalhemidesmosome.

It localises to the cell junction. The protein localises to the hemidesmosome. Its subcellular location is the membrane. The protein resides in the secreted. It is found in the extracellular space. It localises to the extracellular matrix. The protein localises to the basement membrane. In terms of biological role, the 120 kDa linear IgA disease antigen homolog is an anchoring filament component involved in dermal-epidermal cohesion. In Canis lupus familiaris (Dog), this protein is Collagen alpha-1(XVII) chain (COL17A1).